Consider the following 100-residue polypeptide: Urease subunit gamma (100 aa).

The protein belongs to the urease gamma subunit family. As to quaternary structure, heterotrimer of UreA (gamma), UreB (beta) and UreC (alpha) subunits. Three heterotrimers associate to form the active enzyme.

Its subcellular location is the cytoplasm. The catalysed reaction is urea + 2 H2O + H(+) = hydrogencarbonate + 2 NH4(+). The protein operates within nitrogen metabolism; urea degradation; CO(2) and NH(3) from urea (urease route): step 1/1. The chain is Urease subunit gamma from Shewanella halifaxensis (strain HAW-EB4).